The following is a 162-amino-acid chain: Nucleotide-binding protein Anae109_0095 (162 aa).

The protein belongs to the YajQ family.

In terms of biological role, nucleotide-binding protein. The protein is Nucleotide-binding protein Anae109_0095 of Anaeromyxobacter sp. (strain Fw109-5).